The sequence spans 490 residues: UDP-glycosyltransferase 84A1 (490 aa).

Histidine 30 (proton acceptor) is an active-site residue. Histidine 30 lines the an anthocyanidin pocket. UDP-alpha-D-glucose is bound by residues glutamine 358, histidine 373, tryptophan 376, asparagine 377, serine 378, and glutamate 381. Glycine 396 is an an anthocyanidin binding site. Positions 397 and 398 each coordinate UDP-alpha-D-glucose.

The protein belongs to the UDP-glycosyltransferase family. Expressed in roots, flowers and siliques.

It catalyses the reaction (E)-4-coumarate + UDP-alpha-D-glucose = 4-O-(beta-D-glucosyl)-trans-4-coumarate + UDP + H(+). It carries out the reaction (E)-ferulate + UDP-alpha-D-glucose = 1-O-[(E)-feruloyl]-beta-D-glucose + UDP. The enzyme catalyses (E)-caffeate + UDP-alpha-D-glucose = 1-O-[(E)-caffeoyl]-beta-D-glucose + UDP. The catalysed reaction is (E)-sinapate + UDP-alpha-D-glucose = 1-O-(trans-sinapoyl)-beta-D-glucose + UDP. It catalyses the reaction (E)-cinnamate + UDP-alpha-D-glucose = 1-O-(trans-cinnamoyl)-beta-D-glucose + UDP. In terms of biological role, UDP-glucosyltransferase that forms glucose esters with phenylpropanoids. Glucosylates 4-coumarate, ferulate, caffeate, sinapate and cinnamate. Can glucosylate the phytotoxic xenobiotic compound 2,4,5-trichlorophenol (TCP). In Arabidopsis thaliana (Mouse-ear cress), this protein is UDP-glycosyltransferase 84A1.